The sequence spans 385 residues: Multidrug export protein AcrE (385 aa).

The signal sequence occupies residues 1-23 (MTKHARFFLLPSFILISAALIAG). Cys24 is lipidated: N-palmitoyl cysteine. Cys24 carries S-diacylglycerol cysteine lipidation. The segment at 366-385 (ARPGEQVKATTDTPADTASK) is disordered. Polar residues predominate over residues 373 to 385 (KATTDTPADTASK).

This sequence belongs to the membrane fusion protein (MFP) (TC 8.A.1) family. As to quaternary structure, part of the tripartite efflux system AcrEF-TolC, which is composed of an inner membrane transporter, AcrF, a periplasmic membrane fusion protein, AcrE, and an outer membrane component, TolC. The complex forms a large protein conduit and can translocate molecules across both the inner and outer membranes.

Its subcellular location is the cell inner membrane. Part of the tripartite efflux system AcrEF-TolC. Involved in the efflux of indole and organic solvents. In Escherichia coli (strain K12), this protein is Multidrug export protein AcrE (acrE).